The sequence spans 392 residues: Formate-dependent phosphoribosylglycinamide formyltransferase (392 aa).

Residues 22 to 23 (EL) and Glu-82 contribute to the N(1)-(5-phospho-beta-D-ribosyl)glycinamide site. Residues Arg-114, Lys-155, 160 to 165 (SSGKGQ), 195 to 198 (EGVV), and Glu-203 contribute to the ATP site. The ATP-grasp domain maps to 119-308 (RLAAEELQLP…EFALHVRAFL (190 aa)). Residues Glu-267 and Glu-279 each coordinate Mg(2+). N(1)-(5-phospho-beta-D-ribosyl)glycinamide-binding positions include Asp-286, Lys-355, and 362–363 (RR).

This sequence belongs to the PurK/PurT family. Homodimer.

It carries out the reaction N(1)-(5-phospho-beta-D-ribosyl)glycinamide + formate + ATP = N(2)-formyl-N(1)-(5-phospho-beta-D-ribosyl)glycinamide + ADP + phosphate + H(+). It functions in the pathway purine metabolism; IMP biosynthesis via de novo pathway; N(2)-formyl-N(1)-(5-phospho-D-ribosyl)glycinamide from N(1)-(5-phospho-D-ribosyl)glycinamide (formate route): step 1/1. In terms of biological role, involved in the de novo purine biosynthesis. Catalyzes the transfer of formate to 5-phospho-ribosyl-glycinamide (GAR), producing 5-phospho-ribosyl-N-formylglycinamide (FGAR). Formate is provided by PurU via hydrolysis of 10-formyl-tetrahydrofolate. The sequence is that of Formate-dependent phosphoribosylglycinamide formyltransferase from Shigella sonnei (strain Ss046).